Here is a 169-residue protein sequence, read N- to C-terminus: uncharacterized protein (169 aa).

This is an uncharacterized protein from Azospirillum brasilense.